A 664-amino-acid chain; its full sequence is Macoilin (664 aa).

Helical transmembrane passes span 28-48, 75-95, 120-140, and 154-174; these read TFLYLKFLVVWALVLLADFVL, AFSVFFVCVAFTSNIICLLFI, VCLPTVSLWILFVYIEAAIRF, and FAAHCIGYPVVTLGFGFKSYV. Positions 253 to 265 are enriched in basic and acidic residues; sequence REKGKEKDKDAKK. Positions 253–274 are disordered; sequence REKGKEKDKDAKKHNLGINNNN. At S305 the chain carries Phosphoserine. Residues 320 to 348 show a composition bias toward polar residues; sequence KNYKNASGVVNSSPRSHSATNGSIPSSSS. The disordered stretch occupies residues 320–367; the sequence is KNYKNASGVVNSSPRSHSATNGSIPSSSSKNEKKQKCTSKSPSAHKDL. A glycan (N-linked (GlcNAc...) asparagine) is linked at N324. S332 carries the phosphoserine modification. 2 N-linked (GlcNAc...) asparagine glycosylation sites follow: N340 and N452. The segment at 630–664 is disordered; the sequence is TSPLSPVSPHYSSKFVETSPSGLDPNASVYQPLKK. 2 positions are modified to phosphoserine: S631 and S634. N-linked (GlcNAc...) asparagine glycosylation is present at N655.

This sequence belongs to the macoilin family.

The protein resides in the rough endoplasmic reticulum membrane. It is found in the nucleus membrane. Functionally, plays a role in the regulation of neuronal activity. The protein is Macoilin (MACO1) of Sus scrofa (Pig).